The primary structure comprises 344 residues: Trace amine-associated receptor 8c (344 aa).

Residues 1 to 36 (MTSNFSQATLQLCYENVNASCIKTPYSPGLRVLLYM) lie on the Extracellular side of the membrane. N-linked (GlcNAc...) asparagine glycosylation is found at N4 and N18. 2 cysteine pairs are disulfide-bonded: C21-C185 and C96-C189. A helical transmembrane segment spans residues 37–57 (VFGFGAVLAVCGNLLVVISVL). Residues 58–67 (HFKQLHSPAN) are Cytoplasmic-facing. Residues 68–88 (FLIASLASADFLVGISVMPFS) form a helical membrane-spanning segment. Topologically, residues 89–102 (MVRSIESCWYFGDT) are extracellular. A helical transmembrane segment spans residues 103–127 (FCSLHSCCDVAFCYSSALHLCFISV). Topologically, residues 128–146 (DRYIAVTDPLVYPTKFTVS) are cytoplasmic. A helical transmembrane segment spans residues 147 to 167 (VSGICISISWILPLVYSSAVF). Residues 168–196 (YTGISAMGIENLVSALNCVGGCQVVVNQD) are Extracellular-facing. The chain crosses the membrane as a helical span at residues 197–217 (WVLISFLLFFIPTLVMIILYS). Topologically, residues 218-260 (KIFLVAKQQAVKIETSVSGSKGESSLESHKARVAKRERKAAKT) are cytoplasmic. Residues 261 to 281 (LGVTVLAFIVSWLPYTIDTLI) form a helical membrane-spanning segment. The Extracellular portion of the chain corresponds to 282–295 (DAFMGFITPAYVYE). The helical transmembrane segment at 296–319 (FCCWSAYYNSAMNPLIYAFFYPWF) threads the bilayer. Residues 320-344 (RKAMKLILSGKILKGHSSTTSLFSE) lie on the Cytoplasmic side of the membrane.

This sequence belongs to the G-protein coupled receptor 1 family.

It is found in the cell membrane. Olfactory receptor activated by trace amines, such as N-methylpiperidine and N,N-dimethylcyclohexylamine. Trace amine compounds are enriched in animal body fluids and act on trace amine-associated receptors (TAARs) to elicit both intraspecific and interspecific innate behaviors. Ligand-binding causes a conformation change that triggers signaling via G(s)-class of G alpha proteins (GNAL or GNAS). The protein is Trace amine-associated receptor 8c of Rattus norvegicus (Rat).